We begin with the raw amino-acid sequence, 254 residues long: Alcohol dehydrogenase (254 aa).

10-33 (FVAGLGGIGLDTSRELVKRNLKNL) serves as a coordination point for NAD(+). A substrate-binding site is contributed by Ser138. The Proton acceptor role is filled by Tyr151.

Belongs to the short-chain dehydrogenases/reductases (SDR) family. As to quaternary structure, homodimer.

It carries out the reaction a primary alcohol + NAD(+) = an aldehyde + NADH + H(+). It catalyses the reaction a secondary alcohol + NAD(+) = a ketone + NADH + H(+). In Drosophila pseudoobscura pseudoobscura (Fruit fly), this protein is Alcohol dehydrogenase (Adh).